A 585-amino-acid polypeptide reads, in one-letter code: Lipoprotein LpqB (585 aa).

The signal sequence occupies residues 1–18 (MKRLLTVLVVGLVALVSG). C19 is lipidated: N-palmitoyl cysteine. A lipid anchor (S-diacylglycerol cysteine) is attached at C19. Residues 24-46 (SSSSPQAIGTVERPAPPSLPKPT) form a disordered region. A compositionally biased stretch (pro residues) spans 37–46 (PAPPSLPKPT).

Belongs to the LpqB lipoprotein family. As to quaternary structure, interacts with MtrB, probably extracytoplasmically via its sensor domain.

Its subcellular location is the cell membrane. The protein localises to the secreted. It localises to the cell wall. In terms of biological role, may modulate activity of the MtrAB system in controlling homeostasis of the cell wall and cell division. This is Lipoprotein LpqB from Mycolicibacterium smegmatis (strain ATCC 700084 / mc(2)155) (Mycobacterium smegmatis).